Here is a 338-residue protein sequence, read N- to C-terminus: Phytanoyl-CoA dioxygenase, peroxisomal (338 aa).

The transit peptide at 1–30 (MDYTRAGARLQVLLGHLGRPSALQIVAHPV) directs the protein to the peroxisome. N6-succinyllysine is present on residues Lys59 and Lys108. Residues Lys120, Met157, 175–177 (HQD), and Trp193 each bind 2-oxoglutarate. Fe cation contacts are provided by His175 and Asp177. N6-succinyllysine is present on residues Lys231 and Lys252. His264 is a binding site for Fe cation. 2-oxoglutarate-binding residues include Ser266 and Arg275.

This sequence belongs to the PhyH family. In terms of assembly, interacts specifically with FKBP52 and PHYHIP. It depends on Fe cation as a cofactor. L-ascorbate is required as a cofactor. The cofactor is ATP. Mg(2+) serves as cofactor.

The protein resides in the peroxisome. It carries out the reaction phytanoyl-CoA + 2-oxoglutarate + O2 = 2-hydroxyphytanoyl-CoA + succinate + CO2. The enzyme catalyses 3-methylhexadecanoyl-CoA + 2-oxoglutarate + O2 = 2-hydroxy-3-methylhexadecanoyl-CoA + succinate + CO2. The catalysed reaction is hexadecanoyl-CoA + 2-oxoglutarate + O2 = 2-hydroxyhexadecanoyl-CoA + succinate + CO2. It catalyses the reaction octanoyl-CoA + 2-oxoglutarate + O2 = 2-hydroxyoctanoyl-CoA + succinate + CO2. It carries out the reaction decanoyl-CoA + 2-oxoglutarate + O2 = 2-hydroxydecanoyl-CoA + succinate + CO2. The enzyme catalyses 3-methylbutanoyl-CoA + 2-oxoglutarate + O2 = 2-hydroxy-3-methylbutanoyl-CoA + succinate + CO2. The catalysed reaction is heptadecanoyl-CoA + 2-oxoglutarate + O2 = 2-hydroxyheptadecanoyl-CoA + succinate + CO2. It catalyses the reaction eicosanoyl-CoA + 2-oxoglutarate + O2 = 2-hydroxyeicosanoyl-CoA + succinate + CO2. It carries out the reaction octadecanoyl-CoA + 2-oxoglutarate + O2 = 2-hydroxyoctadecanoyl-CoA + succinate + CO2. The enzyme catalyses dodecanoyl-CoA + 2-oxoglutarate + O2 = 2-hydroxydodecanoyl-CoA + succinate + CO2. The catalysed reaction is tetradecanoyl-CoA + 2-oxoglutarate + O2 = 2-hydroxytetradecanoyl-CoA + succinate + CO2. It catalyses the reaction hexanoyl-CoA + 2-oxoglutarate + O2 = 2-hydroxyhexanoyl-CoA + succinate + CO2. It carries out the reaction butanoyl-CoA + 2-oxoglutarate + O2 = 2-hydroxybutanoyl-CoA + succinate + CO2. The enzyme catalyses 3-methylnonanoyl-CoA + 2-oxoglutarate + O2 = 2-hydroxy-3-methylnonanoyl-CoA + succinate + CO2. The catalysed reaction is 3-methylundecanoyl-CoA + 2-oxoglutarate + O2 = 2-hydroxy-3-methylundecanoyl-CoA + succinate + CO2. It catalyses the reaction 3-methyldodecanoyl-CoA + 2-oxoglutarate + O2 = 2-hydroxy-3-methyldodecanoyl-CoA + succinate + CO2. The protein operates within lipid metabolism; fatty acid metabolism. Its function is as follows. Catalyzes the 2-hydroxylation of racemic phytanoyl-CoA and the isomers of 3-methylhexadecanoyl-CoA. Shows activity also towards a variety of other mono-branched 3-methylacyl-CoA esters (with a chain length of at least seven carbon atoms) and straight-chain acyl-CoA esters (with a chain length longer than four carbon atoms). Does not hydroxylate long and very long straight chain acyl-CoAs or 2-methyl-and 4-methyl-branched acyl-CoAs. This chain is Phytanoyl-CoA dioxygenase, peroxisomal (Phyh), found in Rattus norvegicus (Rat).